Here is a 302-residue protein sequence, read N- to C-terminus: Homoserine O-acetyltransferase 1 (302 aa).

Cysteine 142 acts as the Acyl-thioester intermediate in catalysis. The substrate site is built by lysine 163 and serine 192. Residue histidine 235 is the Proton acceptor of the active site. The active site involves glutamate 237. Arginine 249 lines the substrate pocket.

This sequence belongs to the MetA family.

It is found in the cytoplasm. It catalyses the reaction L-homoserine + acetyl-CoA = O-acetyl-L-homoserine + CoA. It participates in amino-acid biosynthesis; L-methionine biosynthesis via de novo pathway; O-acetyl-L-homoserine from L-homoserine: step 1/1. Its function is as follows. Transfers an acetyl group from acetyl-CoA to L-homoserine, forming acetyl-L-homoserine. This Ilyobacter polytropus (strain ATCC 51220 / DSM 2926 / LMG 16218 / CuHBu1) protein is Homoserine O-acetyltransferase 1.